We begin with the raw amino-acid sequence, 1209 residues long: ATP-dependent helicase/nuclease subunit A (1209 aa).

One can recognise a UvrD-like helicase ATP-binding domain in the interval 9–482 (SQWTDEQWQA…IDLAKNFRSR (474 aa)). 30–37 (AAAGSGKT) contacts ATP. Residues 510–798 (AALRFGAQDY…RMMTIHKSKG (289 aa)) form the UvrD-like helicase C-terminal domain.

Belongs to the helicase family. AddA subfamily. As to quaternary structure, heterodimer of AddA and AddB/RexB. The cofactor is Mg(2+).

The catalysed reaction is Couples ATP hydrolysis with the unwinding of duplex DNA by translocating in the 3'-5' direction.. The enzyme catalyses ATP + H2O = ADP + phosphate + H(+). The heterodimer acts as both an ATP-dependent DNA helicase and an ATP-dependent, dual-direction single-stranded exonuclease. Recognizes the chi site generating a DNA molecule suitable for the initiation of homologous recombination. The AddA nuclease domain is required for chi fragment generation; this subunit has the helicase and 3' -&gt; 5' nuclease activities. This chain is ATP-dependent helicase/nuclease subunit A, found in Anoxybacillus flavithermus (strain DSM 21510 / WK1).